The chain runs to 207 residues: Dephospho-CoA kinase (207 aa).

The region spanning 4-203 (VIGLTGGIAS…EEGYIEKPNY (200 aa)) is the DPCK domain. 12–17 (ASGKST) is a binding site for ATP.

This sequence belongs to the CoaE family.

Its subcellular location is the cytoplasm. The catalysed reaction is 3'-dephospho-CoA + ATP = ADP + CoA + H(+). It functions in the pathway cofactor biosynthesis; coenzyme A biosynthesis; CoA from (R)-pantothenate: step 5/5. In terms of biological role, catalyzes the phosphorylation of the 3'-hydroxyl group of dephosphocoenzyme A to form coenzyme A. This Staphylococcus aureus (strain USA300) protein is Dephospho-CoA kinase.